Here is a 738-residue protein sequence, read N- to C-terminus: RNA polymerase II degradation factor 1 (738 aa).

The 43-residue stretch at 21–63 folds into the CUE domain; the sequence is ALKSKIDTLTELFPDWTSDDLIDIVQEYDDLETIIDKITSGAV. Basic and acidic residues predominate over residues 69 to 84; the sequence is VKKPAKKEKYEKKEQQ. Disordered stretches follow at residues 69–455, 467–503, and 640–688; these read VKKP…QQQQ, YLSQ…QGNN, and NGQE…QPVN. Residues 103–121 show a composition bias toward low complexity; that stretch reads KSSNNSNSFTSTKHNSSNN. Residues 211–220 are compositionally biased toward basic and acidic residues; it reads HNNKEEHKQI. A compositionally biased stretch (low complexity) spans 224–237; that stretch reads SLSSKKTTSRTSAS. Residues 256-291 show a composition bias toward basic and acidic residues; it reads KKTESPLENVAELKKEISDIKKDDQKSEASEEKVNE. Residues S260, S273, and S307 each carry the phosphoserine modification. Composition is skewed to acidic residues over residues 298 to 328 and 337 to 358; these read EQEE…EAEE and QTAE…EVTV. Position 338 is a phosphothreonine (T338). 2 stretches are compositionally biased toward low complexity: residues 380–455 and 467–498; these read VPQP…QQQQ and YLSQ…PQSQ. The interval 500-530 is contains the proteolytic activation cleavage site; sequence QGNNVAAQQYYMYQNQFPGYSYPGMFDSQGY. Position 646 is a phosphoserine (S646). Residues 660–688 show a composition bias toward low complexity; the sequence is QKQSQQQQQQQPQGQPQPEVQMQNGQPVN.

The protein belongs to the DEF1 family. Homodimer; may form higher order oligomers. Interacts with the large RNA polymerase II subunit RPO21; the interaction is direct and serves to bridge RPO21 to the Elongin complex in a manner dependent on transcription stress. Interacts with RAD26. In terms of processing, ubiquitinated. Proteolytically cleaved by the proteasome in response to transcription stress; the resulting N-terminal form constitutes the activated nuclear form and the C-terminal portion is degraded.

It is found in the cytoplasm. The protein resides in the nucleus. It localises to the chromosome. Its subcellular location is the telomere. Functionally, recruits the ubiquitination machinery to RNA polymerase II for polyubiquitination, removal and degradation, when the transcription-coupled repair (TCR) factor RAD26 fails to efficiently displace stalled RNA polymerase II. Also involved in telomere length regulation. Binds DNA. The sequence is that of RNA polymerase II degradation factor 1 (DEF1) from Saccharomyces cerevisiae (strain JAY291) (Baker's yeast).